Here is a 263-residue protein sequence, read N- to C-terminus: tRNA uridine(34) hydroxylase (263 aa).

Residues 129-223 form the Rhodanese domain; that stretch reads EGREIALLDT…YFEEVGGAHY (95 aa). Residue Cys-183 is the Cysteine persulfide intermediate of the active site.

This sequence belongs to the TrhO family.

It catalyses the reaction uridine(34) in tRNA + AH2 + O2 = 5-hydroxyuridine(34) in tRNA + A + H2O. In terms of biological role, catalyzes oxygen-dependent 5-hydroxyuridine (ho5U) modification at position 34 in tRNAs. In Variovorax paradoxus (strain S110), this protein is tRNA uridine(34) hydroxylase.